Consider the following 98-residue polypeptide: Large ribosomal subunit protein uL23 (98 aa).

This sequence belongs to the universal ribosomal protein uL23 family. In terms of assembly, part of the 50S ribosomal subunit. Contacts protein L29, and trigger factor when it is bound to the ribosome.

Functionally, one of the early assembly proteins it binds 23S rRNA. One of the proteins that surrounds the polypeptide exit tunnel on the outside of the ribosome. Forms the main docking site for trigger factor binding to the ribosome. The polypeptide is Large ribosomal subunit protein uL23 (Rickettsia africae (strain ESF-5)).